A 176-amino-acid chain; its full sequence is Sperm-egg fusion protein TMEM95 (176 aa).

Positions 1–16 (MWRLALGGVFLAAAQA) are cleaved as a signal peptide. Cystine bridges form between Cys17-Cys118, Cys20-Cys121, Cys105-Cys128, and Cys109-Cys134. At 17–145 (CVFCRLPAHD…PGSQDLWEAK (129 aa)) the chain is on the extracellular side. A helical transmembrane segment spans residues 146-166 (ILLLSIFGAFLLLGVLSLLVE). At 167-176 (SHHLQAKSGL) the chain is on the cytoplasmic side.

It belongs to the TMEM95 family. In terms of assembly, does not interact with sperm-egg fusion proteins IZUMO1 or IZUMO1R/JUNO. In terms of processing, N-glycosylated. Spermatozoa (at protein level).

It localises to the cytoplasmic vesicle. The protein localises to the secretory vesicle. The protein resides in the acrosome membrane. In terms of biological role, sperm protein required for fusion of sperm with the egg membrane during fertilization. The protein is Sperm-egg fusion protein TMEM95 of Homo sapiens (Human).